A 129-amino-acid polypeptide reads, in one-letter code: Small ribosomal subunit protein uS11 (129 aa).

Belongs to the universal ribosomal protein uS11 family. As to quaternary structure, part of the 30S ribosomal subunit. Interacts with proteins S7 and S18. Binds to IF-3.

Functionally, located on the platform of the 30S subunit, it bridges several disparate RNA helices of the 16S rRNA. Forms part of the Shine-Dalgarno cleft in the 70S ribosome. The polypeptide is Small ribosomal subunit protein uS11 (Haemophilus influenzae (strain ATCC 51907 / DSM 11121 / KW20 / Rd)).